We begin with the raw amino-acid sequence, 387 residues long: MNLHEYQAKQLFASYGLPVPRGEVAYNVEDALLVASQLSTSRWVVKAQVHAGGRGKAGGVKLVSSKDELAAVAKSMLGTRLVTYQTDARGQPVNAILVEETCEIDKELYLGAVVDRATRRVVIMASTEGGVEIEKVAHETPEKIFKVVVDPLVGVMPFQCRETAFKLGLKDDQIKQFTHLMMGLGKMFVDCDLSLLEINPLVITKSGQLICLDGKINIDGNALFRQPKLKNMRDVSQEDDRENRASDWELNYIPLDGTIGCMVNGAGLAMATMDVIKLHGGEPANFLDVGGGATKERVSEALKIIVSDEKVKGILVNIFGGIVRCDLIADGILAAVKEVDVKIPVVVRLEGNNAQLGAEILNKSNLNVIAATSLTDAAKKIVAAVSE.

The region spanning 9-244 is the ATP-grasp domain; that stretch reads KQLFASYGLP…VSQEDDRENR (236 aa). Residues K46, 53–55, E99, C102, and E107 each bind ATP; that span reads GRG. The Mg(2+) site is built by N199 and D213. Residues N264 and 321–323 contribute to the substrate site; that span reads GIV.

The protein belongs to the succinate/malate CoA ligase beta subunit family. As to quaternary structure, heterotetramer of two alpha and two beta subunits. Mg(2+) is required as a cofactor.

It carries out the reaction succinate + ATP + CoA = succinyl-CoA + ADP + phosphate. The catalysed reaction is GTP + succinate + CoA = succinyl-CoA + GDP + phosphate. It participates in carbohydrate metabolism; tricarboxylic acid cycle; succinate from succinyl-CoA (ligase route): step 1/1. Functionally, succinyl-CoA synthetase functions in the citric acid cycle (TCA), coupling the hydrolysis of succinyl-CoA to the synthesis of either ATP or GTP and thus represents the only step of substrate-level phosphorylation in the TCA. The beta subunit provides nucleotide specificity of the enzyme and binds the substrate succinate, while the binding sites for coenzyme A and phosphate are found in the alpha subunit. This Legionella pneumophila (strain Paris) protein is Succinate--CoA ligase [ADP-forming] subunit beta.